Consider the following 656-residue polypeptide: Broad substrate specificity ATP-binding cassette transporter ABCG2 (656 aa).

A disordered region spans residues 1–25 (MSSNSYQVSIPMSKRNTNGLPGSSS). The Cytoplasmic segment spans residues 1–394 (MSSNSYQVSI…SFKNLLGNPQ (394 aa)). The ABC transporter domain occupies 37-286 (LSFHDICYRV…FASIGYNCEP (250 aa)). ATP is bound by residues 80–87 (GPTGGGKS), 184–190 (RGVSGGE), Glu211, and His243. Residues 390-652 (LGNPQASVAQ…TIAYLKLLLL (263 aa)) form the ABC transmembrane type-2 domain. A helical transmembrane segment spans residues 395 to 415 (ASVAQIIVTIILGLVIGAIFY). Residues 416–429 (DLKNDPSGIQNRAG) lie on the Extracellular side of the membrane. Residues 430 to 450 (VLFFLTTNQCFSSVSAVELLV) traverse the membrane as a helical segment. The Cytoplasmic portion of the chain corresponds to 451-478 (VEKKLFIHEYISGYYRVSSYFFGKLLSD). Residues 479 to 498 (LLPMRMLPSIIFTCITYFLL) traverse the membrane as a helical segment. The Extracellular segment spans residues 499–507 (GLKPAVGSF). A helical transmembrane segment spans residues 508–530 (FIMMFTLMMVAYSASSMALAIAA). Over 531-536 (GQSVVS) the chain is Cytoplasmic. A helical membrane pass occupies residues 537–557 (VATLLMTISFVFMMIFSGLLV). The Extracellular portion of the chain corresponds to 558 to 631 (NLKTVVPWLS…LSAWGLWQNH (74 aa)). An intrachain disulfide couples Cys593 to Cys609. Asn597 and Asn601 each carry an N-linked (GlcNAc...) asparagine glycan. A helical membrane pass occupies residues 632 to 652 (VALACMMVIFLTIAYLKLLLL). Residues 653–656 (KKYS) are Cytoplasmic-facing.

This sequence belongs to the ABC transporter superfamily. ABCG family. Eye pigment precursor importer (TC 3.A.1.204) subfamily. As to quaternary structure, homodimer; disulfide-linked. The minimal functional unit is a homodimer, but the major oligomeric form in plasma membrane is a homotetramer with possibility of higher order oligomerization up to homododecamers. In terms of processing, N-glycosylated. Glycosylation-deficient ABCG2 is normally expressed and functional. Phosphorylated. Phosphorylation may regulate the localization to the plasma membrane, the homooligomerization and therefore, the activity of the transporter. In terms of tissue distribution, high expression in brain, kidney and lung. Also expressed in livere, colon, small intestine, heart, skeletal muscle, spleen, stomach and pancreas.

The protein localises to the cell membrane. It is found in the apical cell membrane. Its subcellular location is the mitochondrion membrane. It carries out the reaction ATP + H2O + xenobioticSide 1 = ADP + phosphate + xenobioticSide 2.. It catalyses the reaction urate(in) + ATP + H2O = urate(out) + ADP + phosphate + H(+). The catalysed reaction is indoxyl sulfate(in) + ATP + H2O = indoxyl sulfate(out) + ADP + phosphate + H(+). The enzyme catalyses sphing-4-enine 1-phosphate(in) + ATP + H2O = sphing-4-enine 1-phosphate(out) + ADP + phosphate + H(+). It carries out the reaction estrone 3-sulfate(in) + ATP + H2O = estrone 3-sulfate(out) + ADP + phosphate + H(+). It catalyses the reaction dehydroepiandrosterone 3-sulfate(in) + ATP + H2O = dehydroepiandrosterone 3-sulfate(out) + ADP + phosphate + H(+). The catalysed reaction is 4-methylumbelliferone sulfate(in) + ATP + H2O = 4-methylumbelliferone sulfate(out) + ADP + phosphate + H(+). The enzyme catalyses 5,7-dimethyl-2-methylamino-4-(3-pyridylmethyl)-1,3-benzothiazol-6-yl beta-D-glucuronate(in) + ATP + H2O = 5,7-dimethyl-2-methylamino-4-(3-pyridylmethyl)-1,3-benzothiazol-6-yl beta-D-glucuronate(out) + ADP + phosphate + H(+). It carries out the reaction 4-methylumbelliferone beta-D-glucuronate(in) + ATP + H2O = 4-methylumbelliferone beta-D-glucuronate(out) + ADP + phosphate + H(+). It catalyses the reaction 5,7-dimethyl-2-methylamino-4-(3-pyridylmethyl)-1,3-benzothiazol-6-yl sulfate(in) + ATP + H2O = 5,7-dimethyl-2-methylamino-4-(3-pyridylmethyl)-1,3-benzothiazol-6-yl sulfate(out) + ADP + phosphate + H(+). The catalysed reaction is 17beta-estradiol 17-O-(beta-D-glucuronate)(in) + ATP + H2O = 17beta-estradiol 17-O-(beta-D-glucuronate)(out) + ADP + phosphate + H(+). The enzyme catalyses methotrexate(in) + ATP + H2O = methotrexate(out) + ADP + phosphate + H(+). It carries out the reaction riboflavin(in) + ATP + H2O = riboflavin(out) + ADP + phosphate + H(+). It catalyses the reaction pheophorbide a(in) + ATP + H2O = pheophorbide a(out) + ADP + phosphate + H(+). The catalysed reaction is itaconate(in) + ATP + H2O = itaconate(out) + ADP + phosphate + H(+). Broad substrate specificity ATP-dependent transporter of the ATP-binding cassette (ABC) family that actively extrudes a wide variety of physiological compounds, dietary toxins and xenobiotics from cells. Involved in porphyrin homeostasis, mediating the export of protoporphyrin IX (PPIX) from both mitochondria to cytosol and cytosol to extracellular space, it also functions in the cellular export of heme. Also mediates the efflux of sphingosine-1-P from cells. Acts as a urate exporter functioning in both renal and extrarenal urate excretion. In kidney, it also functions as a physiological exporter of the uremic toxin indoxyl sulfate. Also involved in the excretion of steroids like estrone 3-sulfate/E1S, 3beta-sulfooxy-androst-5-en-17-one/DHEAS, and other sulfate conjugates. Mediates the secretion of the riboflavin and biotin vitamins into milk. Extrudes pheophorbide a, a phototoxic porphyrin catabolite of chlorophyll, reducing its bioavailability. Plays an important role in the exclusion of xenobiotics from the brain. It confers to cells a resistance to multiple drugs and other xenobiotics including mitoxantrone, pheophorbide, camptothecin, methotrexate, azidothymidine, and the anthracyclines daunorubicin and doxorubicin, through the control of their efflux. In placenta, it limits the penetration of drugs from the maternal plasma into the fetus. May play a role in early stem cell self-renewal by blocking differentiation. In inflammatory macrophages, exports itaconate from the cytosol to the extracellular compartment and limits the activation of TFEB-dependent lysosome biogenesis involved in antibacterial innate immune response. In Sus scrofa (Pig), this protein is Broad substrate specificity ATP-binding cassette transporter ABCG2 (ABCG2).